Here is a 355-residue protein sequence, read N- to C-terminus: Phosphoribosylformylglycinamidine cyclo-ligase (355 aa).

Belongs to the AIR synthase family.

Its subcellular location is the cytoplasm. It catalyses the reaction 2-formamido-N(1)-(5-O-phospho-beta-D-ribosyl)acetamidine + ATP = 5-amino-1-(5-phospho-beta-D-ribosyl)imidazole + ADP + phosphate + H(+). The protein operates within purine metabolism; IMP biosynthesis via de novo pathway; 5-amino-1-(5-phospho-D-ribosyl)imidazole from N(2)-formyl-N(1)-(5-phospho-D-ribosyl)glycinamide: step 2/2. This chain is Phosphoribosylformylglycinamidine cyclo-ligase, found in Paraburkholderia phymatum (strain DSM 17167 / CIP 108236 / LMG 21445 / STM815) (Burkholderia phymatum).